A 539-amino-acid polypeptide reads, in one-letter code: Membrane protein insertase YidC (539 aa).

5 helical membrane passes run 6 to 26, 341 to 361, 416 to 436, 454 to 474, and 495 to 515; these read TLLV…WQVA, SVIQ…TFIV, LGGC…YWAL, LSAQ…MFLI, and PVMF…YWLV.

This sequence belongs to the OXA1/ALB3/YidC family. Type 1 subfamily. In terms of assembly, interacts with the Sec translocase complex via SecD. Specifically interacts with transmembrane segments of nascent integral membrane proteins during membrane integration.

The protein localises to the cell inner membrane. Its function is as follows. Required for the insertion and/or proper folding and/or complex formation of integral membrane proteins into the membrane. Involved in integration of membrane proteins that insert both dependently and independently of the Sec translocase complex, as well as at least some lipoproteins. Aids folding of multispanning membrane proteins. The polypeptide is Membrane protein insertase YidC (Vibrio vulnificus (strain YJ016)).